The sequence spans 472 residues: 3-isopropylmalate dehydratase large subunit (472 aa).

[4Fe-4S] cluster is bound by residues C353, C414, and C417.

Belongs to the aconitase/IPM isomerase family. LeuC type 1 subfamily. As to quaternary structure, heterodimer of LeuC and LeuD. The cofactor is [4Fe-4S] cluster.

It catalyses the reaction (2R,3S)-3-isopropylmalate = (2S)-2-isopropylmalate. It participates in amino-acid biosynthesis; L-leucine biosynthesis; L-leucine from 3-methyl-2-oxobutanoate: step 2/4. Functionally, catalyzes the isomerization between 2-isopropylmalate and 3-isopropylmalate, via the formation of 2-isopropylmaleate. The chain is 3-isopropylmalate dehydratase large subunit from Acinetobacter baumannii (strain AB0057).